Consider the following 266-residue polypeptide: Diphthine synthase (266 aa).

S-adenosyl-L-methionine-binding positions include L9, D85, I88, 113–114 (TA), L168, A210, and H235.

This sequence belongs to the diphthine synthase family. Homodimer.

It carries out the reaction 2-[(3S)-amino-3-carboxypropyl]-L-histidyl-[translation elongation factor 2] + 3 S-adenosyl-L-methionine = diphthine-[translation elongation factor 2] + 3 S-adenosyl-L-homocysteine + 3 H(+). Its pathway is protein modification; peptidyl-diphthamide biosynthesis. In terms of biological role, S-adenosyl-L-methionine-dependent methyltransferase that catalyzes the trimethylation of the amino group of the modified target histidine residue in translation elongation factor 2 (EF-2), to form an intermediate called diphthine. The three successive methylation reactions represent the second step of diphthamide biosynthesis. The polypeptide is Diphthine synthase (Natronomonas pharaonis (strain ATCC 35678 / DSM 2160 / CIP 103997 / JCM 8858 / NBRC 14720 / NCIMB 2260 / Gabara) (Halobacterium pharaonis)).